We begin with the raw amino-acid sequence, 130 residues long: Glutamate-rich protein 4 (130 aa).

Over residues 91-104 (EEEEESSKEEEEDQ) the composition is skewed to acidic residues. Residues 91 to 130 (EEEEESSKEEEEDQEPQRKQEEEHLEACPAPHPPDFEMMI) form a disordered region. Basic and acidic residues predominate over residues 105-116 (EPQRKQEEEHLE).

The protein is Glutamate-rich protein 4 (ERICH4) of Homo sapiens (Human).